Consider the following 58-residue polypeptide: Proteinase inhibitor PSKP-2 (58 aa).

The Kazal-like domain maps to 1 to 58 (VIEPDCKKYEGKKCPPDIALVCGTNGREYYNECALCVFIRDSTLKADKAIKIKKWGKC). 3 disulfide bridges follow: Cys-6–Cys-36, Cys-14–Cys-33, and Cys-22–Cys-58.

In terms of tissue distribution, skin.

It localises to the secreted. May have a role in mucosal defense against microbes by interacting directly with their membranes. The protein is Proteinase inhibitor PSKP-2 of Phyllomedusa sauvagei (Sauvage's leaf frog).